A 116-amino-acid chain; its full sequence is Aspartate 1-decarboxylase (116 aa).

Ser-25 acts as the Schiff-base intermediate with substrate; via pyruvic acid in catalysis. Ser-25 carries the post-translational modification Pyruvic acid (Ser). Thr-57 provides a ligand contact to substrate. The Proton donor role is filled by Tyr-58. A substrate-binding site is contributed by Gly-73–Ala-75.

The protein belongs to the PanD family. As to quaternary structure, heterooctamer of four alpha and four beta subunits. The cofactor is pyruvate. In terms of processing, is synthesized initially as an inactive proenzyme, which is activated by self-cleavage at a specific serine bond to produce a beta-subunit with a hydroxyl group at its C-terminus and an alpha-subunit with a pyruvoyl group at its N-terminus.

It localises to the cytoplasm. It catalyses the reaction L-aspartate + H(+) = beta-alanine + CO2. It participates in cofactor biosynthesis; (R)-pantothenate biosynthesis; beta-alanine from L-aspartate: step 1/1. Its function is as follows. Catalyzes the pyruvoyl-dependent decarboxylation of aspartate to produce beta-alanine. This Leptospira interrogans serogroup Icterohaemorrhagiae serovar Lai (strain 56601) protein is Aspartate 1-decarboxylase.